We begin with the raw amino-acid sequence, 354 residues long: S-adenosylmethionine:tRNA ribosyltransferase-isomerase (354 aa).

This sequence belongs to the QueA family. In terms of assembly, monomer.

The protein resides in the cytoplasm. The catalysed reaction is 7-aminomethyl-7-carbaguanosine(34) in tRNA + S-adenosyl-L-methionine = epoxyqueuosine(34) in tRNA + adenine + L-methionine + 2 H(+). The protein operates within tRNA modification; tRNA-queuosine biosynthesis. In terms of biological role, transfers and isomerizes the ribose moiety from AdoMet to the 7-aminomethyl group of 7-deazaguanine (preQ1-tRNA) to give epoxyqueuosine (oQ-tRNA). The chain is S-adenosylmethionine:tRNA ribosyltransferase-isomerase from Salmonella newport (strain SL254).